A 129-amino-acid chain; its full sequence is Arsenate-mycothiol transferase ArsC2 (129 aa).

Belongs to the low molecular weight phosphotyrosine protein phosphatase family.

The protein resides in the cytoplasm. It catalyses the reaction mycothiol + arsenate = arseno-mycothiol + H2O. Its function is as follows. Involved in defense against toxic arsenate. Involved in the mycothiol/myoredoxin redox pathway which uses a mycothioltransferase mechanism; facilitates adduct formation between arsenate and mycothiol. The sequence is that of Arsenate-mycothiol transferase ArsC2 (arsC2) from Corynebacterium glutamicum (strain ATCC 13032 / K051).